A 462-amino-acid chain; its full sequence is MQEGKISQIIGPVVDVDFAEGQLPSILDALTVTRQDGSKLVLETQQHLGEERVRRIAMEGTDGLVRGMSAKNTGKPIQVPVGEEVLGRMLNVVGDPIDGKGPVLSKKSYSIHRTAPKFDELSTKAEMFETGIKVIDLLEPYSRGGKTGLFGGAGVGKTVLIMELINNIAKEQSGFSVFAGVGERTREGNDLWHEMMESGVIDKTALVFGQMNEPPGARARVALTGLSIAEYFRDEEGRDVLLFIDNIFRFTQAGSEVSALLGRMPSAVGYQPTLSTEMGELQDRITSTKKGSVTSVQAIYVPADDLTDPAPATAFTHLDATTVLSRQIAELGIYPAVDPLDSTSRILDPNVIGDDHYDTAQAVKQILQRYKDLQDIIAILGMDELSDDDKLVVARARKVQRFLSQPFFVAEAFTGLAGKYVKLEDTIKGFKEIIAGRHDNLPEAAFYLVGTIEEAVAKVKTL.

151-158 (GGAGVGKT) contributes to the ATP binding site.

The protein belongs to the ATPase alpha/beta chains family. As to quaternary structure, F-type ATPases have 2 components, CF(1) - the catalytic core - and CF(0) - the membrane proton channel. CF(1) has five subunits: alpha(3), beta(3), gamma(1), delta(1), epsilon(1). CF(0) has three main subunits: a(1), b(2) and c(9-12). The alpha and beta chains form an alternating ring which encloses part of the gamma chain. CF(1) is attached to CF(0) by a central stalk formed by the gamma and epsilon chains, while a peripheral stalk is formed by the delta and b chains.

Its subcellular location is the cell inner membrane. It catalyses the reaction ATP + H2O + 4 H(+)(in) = ADP + phosphate + 5 H(+)(out). Its function is as follows. Produces ATP from ADP in the presence of a proton gradient across the membrane. The catalytic sites are hosted primarily by the beta subunits. The sequence is that of ATP synthase subunit beta from Chlorobium limicola.